Here is a 366-residue protein sequence, read N- to C-terminus: Aminomethyltransferase (366 aa).

It belongs to the GcvT family. In terms of assembly, the glycine cleavage system is composed of four proteins: P, T, L and H.

It carries out the reaction N(6)-[(R)-S(8)-aminomethyldihydrolipoyl]-L-lysyl-[protein] + (6S)-5,6,7,8-tetrahydrofolate = N(6)-[(R)-dihydrolipoyl]-L-lysyl-[protein] + (6R)-5,10-methylene-5,6,7,8-tetrahydrofolate + NH4(+). Functionally, the glycine cleavage system catalyzes the degradation of glycine. The sequence is that of Aminomethyltransferase from Sodalis glossinidius (strain morsitans).